The following is a 122-amino-acid chain: Large ribosomal subunit protein uL18 (122 aa).

This sequence belongs to the universal ribosomal protein uL18 family. As to quaternary structure, part of the 50S ribosomal subunit; part of the 5S rRNA/L5/L18/L25 subcomplex. Contacts the 5S and 23S rRNAs.

Its function is as follows. This is one of the proteins that bind and probably mediate the attachment of the 5S RNA into the large ribosomal subunit, where it forms part of the central protuberance. The chain is Large ribosomal subunit protein uL18 from Prochlorococcus marinus (strain MIT 9515).